The following is a 388-amino-acid chain: Chorismate synthase (388 aa).

Arg39 and Arg45 together coordinate NADP(+). Residues Arg130–Ser132, Asn251–Ala252, Gly296, Lys311–Thr315, and Arg337 each bind FMN.

Belongs to the chorismate synthase family. In terms of assembly, homotetramer. It depends on FMNH2 as a cofactor.

The enzyme catalyses 5-O-(1-carboxyvinyl)-3-phosphoshikimate = chorismate + phosphate. It functions in the pathway metabolic intermediate biosynthesis; chorismate biosynthesis; chorismate from D-erythrose 4-phosphate and phosphoenolpyruvate: step 7/7. In terms of biological role, catalyzes the anti-1,4-elimination of the C-3 phosphate and the C-6 proR hydrogen from 5-enolpyruvylshikimate-3-phosphate (EPSP) to yield chorismate, which is the branch point compound that serves as the starting substrate for the three terminal pathways of aromatic amino acid biosynthesis. This reaction introduces a second double bond into the aromatic ring system. This chain is Chorismate synthase, found in Geobacillus kaustophilus (strain HTA426).